Here is a 1003-residue protein sequence, read N- to C-terminus: MSAFNLERFRFDKGKKIDTEFGEKGASSRPSTPNSQLEDHVTSIPETPEAKRVNNPSLFKKDKGVSFLDSDSENEDHQSKSKFSSTHQQSHPREENGTSDSVTDDSEDDYLAVKRPSASTAQVKDGSKYKNLQRLKEIFPKQNNDELLKLIESTSTLDGAVAAGVVLFNKEGSSRKRKLDEVPKDSSPVHEGINGQTKKKKKIDRVSSDNDSSLSEDDWEKQEASVKKLQRHFPDLDKEELREVLQEHDWSFHEALEALKLFAEDETDALQNAAKKEVSNGKEFSRSNKNDNKSSAKAKANQNSNKAMAQNGVKKKGKGKKYSENAKRDTRDLESEESASDAGSCLDEDYSSGDEKLEEEYKTKILSFLQDASLDELYLIPHCSHKKAQKITELRPFSSWESLFEKMTKSNGLSEDLIWDCQTLIKEREVVMKLMNKCEEISRTLTKQVTQLTEDGECGWNIEQPSIMSENLVLKPYQKIGLNWLALLHKHKVNMILADEMGLGKTVQAIAFLAHLYVTGDSGPHLVVVPASTMDNWIREFNQWCPSMNILLYYGSQEERKHLRYDILNKVVEFNVIVTTYNCAISSAEDRSLFRRLKLNFAVFDEGHMLKNMSAIRYQHLMTLNARSRLLLTGTPVQNNLLELMSLLNFVMPHMFSSSTSEIKRLFSSKAKSTDEQTIFEKERIAHAKQIMKPFILRRVKSEVLKQLPPKQDKIKFCQMSKKQEQLYSDLLNKLKKSIDATEKNSELCNVMMHLRKMANHPLLHRQYYTADRLRTMSKLMLKEPTHCDANPDLIFEDMEVMTDFELHRLCNEFTTLSQYKLEKELILDSGKFNILEKLLSDIKKKGDRVVLFSQFTMMLDIIEVFLRHHQHRYVRLDGKTQISERIHLIDEFNTDMDIFIFLLSTKAGGLGINLTSANIVILHDIDCNPYNDKQAEDRCHRVGQTKEVKVIKLIGKGTIEESMLKISQQKLRLEQDMTTNDTGDEGTIPLDMATLLKTSLGL.

3 disordered regions span residues lysine 15–lysine 130, glycine 172–aspartate 235, and alanine 274–serine 351. Basic and acidic residues-rich tracts occupy residues glycine 172 to proline 188, lysine 221 to aspartate 235, and alanine 274 to serine 294. The CUE domain occupies lysine 221–glutamate 264. Low complexity predominate over residues serine 295–asparagine 311. Positions lysine 321 to leucine 333 are enriched in basic and acidic residues. The region spanning alanine 486–histidine 654 is the Helicase ATP-binding domain. Aspartate 499–threonine 506 is an ATP binding site. Residues aspartate 605–histidine 608 carry the DEGH box motif. The Helicase C-terminal domain occupies isoleucine 835–leucine 997.

This sequence belongs to the SNF2/RAD54 helicase family.

The protein resides in the nucleus. It is found in the chromosome. The catalysed reaction is ATP + H2O = ADP + phosphate + H(+). In terms of biological role, DNA helicase that possesses intrinsic ATP-dependent nucleosome-remodeling activity and is both required for DNA repair and heterochromatin organization. Promotes DNA end resection of double-strand breaks (DSBs) following DNA damage: probably acts by weakening histone DNA interactions in nucleosomes flanking DSBs. Required for the restoration of heterochromatin organization after replication. The polypeptide is SWI/SNF-related matrix-associated actin-dependent regulator of chromatin subfamily A containing DEAD/H box 1 (smarcad1) (Xenopus tropicalis (Western clawed frog)).